We begin with the raw amino-acid sequence, 326 residues long: Protein-ribulosamine 3-kinase, chloroplastic (326 aa).

A chloroplast-targeting transit peptide spans 1–30; sequence MAVASLSICFSARPHLLLRNFSPRPKFVAM. Residue 125-127 coordinates ATP; sequence EFI. The active-site Proton acceptor is the D230.

It belongs to the fructosamine kinase family.

It is found in the plastid. The protein localises to the chloroplast. The catalysed reaction is N(6)-D-ribulosyl-L-lysyl-[protein] + ATP = N(6)-(3-O-phospho-D-ribulosyl)-L-lysyl-[protein] + ADP + H(+). It catalyses the reaction N(6)-(D-erythrulosyl)-L-lysyl-[protein] + ATP = N(6)-(3-O-phospho-D-erythrulosyl)-L-lysyl-[protein] + ADP + H(+). Its function is as follows. Initiates a process leading to the deglycation of proteins. Phosphorylates low-molecular-mass and protein-bound erythrulosamines and ribulosamines, but not fructosamines or psicosamines, on the third carbon of the sugar moiety. Protein-bound erythrulosamine 3-phosphates and ribulosamine 3-phosphates are unstable and decompose under physiological conditions. The polypeptide is Protein-ribulosamine 3-kinase, chloroplastic (Arabidopsis thaliana (Mouse-ear cress)).